Here is a 201-residue protein sequence, read N- to C-terminus: Holliday junction branch migration complex subunit RuvA (201 aa).

The tract at residues 1–64 is domain I; that stretch reads MIGRLRGELV…EDAHVLYGFA (64 aa). The tract at residues 65 to 143 is domain II; that stretch reads SESERALFRS…SLPAAVTLTG (79 aa). Residues 144–153 form a flexible linker region; sequence GKPAAAAARA. The interval 153–201 is domain III; that stretch reads APDPVSDAVSALVSLGYKPQEASRLISAVEGEAERSEDLIRLALKATLK.

The protein belongs to the RuvA family. Homotetramer. Forms an RuvA(8)-RuvB(12)-Holliday junction (HJ) complex. HJ DNA is sandwiched between 2 RuvA tetramers; dsDNA enters through RuvA and exits via RuvB. An RuvB hexamer assembles on each DNA strand where it exits the tetramer. Each RuvB hexamer is contacted by two RuvA subunits (via domain III) on 2 adjacent RuvB subunits; this complex drives branch migration. In the full resolvosome a probable DNA-RuvA(4)-RuvB(12)-RuvC(2) complex forms which resolves the HJ.

Its subcellular location is the cytoplasm. In terms of biological role, the RuvA-RuvB-RuvC complex processes Holliday junction (HJ) DNA during genetic recombination and DNA repair, while the RuvA-RuvB complex plays an important role in the rescue of blocked DNA replication forks via replication fork reversal (RFR). RuvA specifically binds to HJ cruciform DNA, conferring on it an open structure. The RuvB hexamer acts as an ATP-dependent pump, pulling dsDNA into and through the RuvAB complex. HJ branch migration allows RuvC to scan DNA until it finds its consensus sequence, where it cleaves and resolves the cruciform DNA. This is Holliday junction branch migration complex subunit RuvA from Thioalkalivibrio sulfidiphilus (strain HL-EbGR7).